Consider the following 341-residue polypeptide: 4-hydroxy-2-oxovalerate aldolase 2 (341 aa).

Residues 8–260 (VTVHDMTLRD…ETGVDVAKIT (253 aa)) enclose the Pyruvate carboxyltransferase domain. Residue 16–17 (RD) participates in substrate binding. Residue D17 coordinates Mn(2+). H20 (proton acceptor) is an active-site residue. Substrate-binding residues include S170 and H199. Mn(2+) is bound by residues H199 and H201. Substrate is bound at residue Y290.

The protein belongs to the 4-hydroxy-2-oxovalerate aldolase family.

It carries out the reaction (S)-4-hydroxy-2-oxopentanoate = acetaldehyde + pyruvate. This is 4-hydroxy-2-oxovalerate aldolase 2 from Dechloromonas aromatica (strain RCB).